The chain runs to 428 residues: GTPase Obg (428 aa).

One can recognise an Obg domain in the interval 1–158 (MFVDQVKIYV…RDVILELKVL (158 aa)). One can recognise an OBG-type G domain in the interval 159-329 (ADVGLVGFPS…LLFEVANLIE (171 aa)). GTP-binding positions include 165–172 (GFPSVGKS), 190–194 (FTTIV), 212–215 (DLPG), 282–285 (NKMD), and 310–312 (SAV). 2 residues coordinate Mg(2+): Ser172 and Thr192. The OCT domain occupies 350–428 (KFETEGVKFD…ILEYEFEFID (79 aa)).

This sequence belongs to the TRAFAC class OBG-HflX-like GTPase superfamily. OBG GTPase family. Monomer. It depends on Mg(2+) as a cofactor.

The protein resides in the cytoplasm. Functionally, an essential GTPase which binds GTP, GDP and possibly (p)ppGpp with moderate affinity, with high nucleotide exchange rates and a fairly low GTP hydrolysis rate. Plays a role in control of the cell cycle, stress response, ribosome biogenesis and in those bacteria that undergo differentiation, in morphogenesis control. This Bacillus thuringiensis (strain Al Hakam) protein is GTPase Obg.